The following is a 217-amino-acid chain: Carbon disulfide hydrolase (217 aa).

3 residues coordinate Zn(2+): cysteine 39, histidine 98, and cysteine 101. Residues 192 to 217 (DKEKRARTDCTPTPYGVKGNQPPRWK) form a disordered region.

Belongs to the beta-class carbonic anhydrase family. In terms of assembly, forms only homooctamers in solution. It depends on Zn(2+) as a cofactor.

It catalyses the reaction carbon disulfide + 2 H2O = 2 hydrogen sulfide + CO2 + 2 H(+). Its pathway is sulfur metabolism; hydrogen sulfide biosynthesis. Catalyzes the conversion of carbon disulfide into hydrogen sulfide and carbon dioxide, with carbonyl sulfide as an intermediate. Likely plays a key role in sulfur metabolism that allows A.thiooxidans S1p to grow on carbon disulfide as the main carbon and energy source. Does not show carbonic anhydrase activity (hydration of CO(2) to carbonate). The polypeptide is Carbon disulfide hydrolase (Acidithiobacillus thiooxidans (Thiobacillus thiooxidans)).